The chain runs to 165 residues: Interferon gamma (165 aa).

The signal sequence occupies residues 1–23 (MKYTSYILAFQLCIVLGSLGCYC). Q24 bears the Pyrrolidone carboxylic acid mark. N48 and N120 each carry an N-linked (GlcNAc...) asparagine glycan.

It belongs to the type II (or gamma) interferon family. Homodimer. Interacts with IFNGR1 (via extracellular domain); this interaction promotes IFNGR1 dimerization. In terms of tissue distribution, released primarily from activated T lymphocytes.

It is found in the secreted. Type II interferon produced by immune cells such as T-cells and NK cells that plays crucial roles in antimicrobial, antiviral, and antitumor responses by activating effector immune cells and enhancing antigen presentation. Primarily signals through the JAK-STAT pathway after interaction with its receptor IFNGR1 to affect gene regulation. Upon IFNG binding, IFNGR1 intracellular domain opens out to allow association of downstream signaling components JAK2, JAK1 and STAT1, leading to STAT1 activation, nuclear translocation and transcription of IFNG-regulated genes. Many of the induced genes are transcription factors such as IRF1 that are able to further drive regulation of a next wave of transcription. Plays a role in class I antigen presentation pathway by inducing a replacement of catalytic proteasome subunits with immunoproteasome subunits. In turn, increases the quantity, quality, and repertoire of peptides for class I MHC loading. Increases the efficiency of peptide generation also by inducing the expression of activator PA28 that associates with the proteasome and alters its proteolytic cleavage preference. Up-regulates as well MHC II complexes on the cell surface by promoting expression of several key molecules such as cathepsins B/CTSB, H/CTSH, and L/CTSL. Participates in the regulation of hematopoietic stem cells during development and under homeostatic conditions by affecting their development, quiescence, and differentiation. This Macaca fascicularis (Crab-eating macaque) protein is Interferon gamma (IFNG).